The chain runs to 686 residues: Calponin homology and LIM domain-containing protein (686 aa).

Residues Glu15–Ala120 form the Calponin-homology (CH) domain. LIM zinc-binding domains follow at residues Met139–Leu200 and Asn219–Lys279. The span at Lys305–Asp314 shows a compositional bias: basic and acidic residues. The interval Lys305 to Lys345 is disordered. Over residues Lys322–Asn333 the composition is skewed to low complexity. LIM zinc-binding domains are found at residues Gly373–Ser435, Lys437–Tyr495, Asp519–Ser579, and Asp583–Ser658.

In terms of assembly, interacts with limF and rab21.

Its function is as follows. Involved in the regulation of phagocytosis. May repress rab21. The sequence is that of Calponin homology and LIM domain-containing protein (ChLim) from Dictyostelium discoideum (Social amoeba).